A 30-amino-acid chain; its full sequence is Peptidase 1 (30 aa).

Belongs to the peptidase C1 family.

It localises to the secreted. The enzyme catalyses Broad endopeptidase specificity.. Thiol protease that hydrolyzes proteins, with a preference for Phe or basic residues. The protein is Peptidase 1 (DERM1) of Dermatophagoides microceras (House dust mite).